We begin with the raw amino-acid sequence, 415 residues long: Multidrug resistance protein MdtA (415 aa).

An N-terminal signal peptide occupies residues 1–21 (MKGSYKSRWVIVIVVVIAAIA). 2 disordered regions span residues 32 to 59 (SRSA…SGPL) and 392 to 415 (EAQS…GARS). Positions 399-415 (SEEKATSREYAKKGARS) are enriched in basic and acidic residues.

Belongs to the membrane fusion protein (MFP) (TC 8.A.1) family. In terms of assembly, part of a tripartite efflux system composed of MdtA, MdtB and MdtC.

The protein localises to the cell inner membrane. Functionally, the MdtABC tripartite complex confers resistance against novobiocin and deoxycholate. The chain is Multidrug resistance protein MdtA from Escherichia coli (strain SMS-3-5 / SECEC).